A 346-amino-acid polypeptide reads, in one-letter code: Structure-specific endonuclease subunit SLX1 (346 aa).

The GIY-YIG domain maps to 10 to 92; it reads ALYCVYILRS…TNPHTSLHIP (83 aa). Residues 238–296 form an SLX1-type zinc finger; it reads CVVCKEEIDPEEGGLHAVCSNEGCEGVGHLRCWGRYLLKSEEGGGEGAILPVGGRCPRC. Residues 324 to 336 show a composition bias toward basic residues; sequence KVKRKRAPRKKTA. The interval 324–346 is disordered; that stretch reads KVKRKRAPRKKTAKTKETREEDG. Basic and acidic residues predominate over residues 337-346; it reads KTKETREEDG.

The protein belongs to the SLX1 family. Forms a heterodimer with SLX4. A divalent metal cation serves as cofactor.

The protein localises to the nucleus. Catalytic subunit of the SLX1-SLX4 structure-specific endonuclease that resolves DNA secondary structures generated during DNA repair and recombination. Has endonuclease activity towards branched DNA substrates, introducing single-strand cuts in duplex DNA close to junctions with ss-DNA. This Podospora anserina (strain S / ATCC MYA-4624 / DSM 980 / FGSC 10383) (Pleurage anserina) protein is Structure-specific endonuclease subunit SLX1.